We begin with the raw amino-acid sequence, 416 residues long: 3-oxoacyl-[acyl-carrier-protein] synthase 2 (416 aa).

One can recognise a Ketosynthase family 3 (KS3) domain in the interval 6-414; the sequence is KKRVVVTGLG…GHNVTLAFKK (409 aa). Active-site for beta-ketoacyl synthase activity residues include cysteine 167, histidine 307, and histidine 344.

It belongs to the thiolase-like superfamily. Beta-ketoacyl-ACP synthases family. As to quaternary structure, homodimer.

It carries out the reaction a fatty acyl-[ACP] + malonyl-[ACP] + H(+) = a 3-oxoacyl-[ACP] + holo-[ACP] + CO2. The catalysed reaction is (9Z)-hexadecenoyl-[ACP] + malonyl-[ACP] + H(+) = 3-oxo-(11Z)-octadecenoyl-[ACP] + holo-[ACP] + CO2. The protein operates within lipid metabolism; fatty acid biosynthesis. In terms of biological role, involved in the type II fatty acid elongation cycle. Catalyzes the elongation of a wide range of acyl-ACP by the addition of two carbons from malonyl-ACP to an acyl acceptor. Can efficiently catalyze the conversion of palmitoleoyl-ACP (cis-hexadec-9-enoyl-ACP) to cis-vaccenoyl-ACP (cis-octadec-11-enoyl-ACP), an essential step in the thermal regulation of fatty acid composition. This is 3-oxoacyl-[acyl-carrier-protein] synthase 2 (fabF) from Synechocystis sp. (strain ATCC 27184 / PCC 6803 / Kazusa).